A 237-amino-acid chain; its full sequence is B3 domain-containing protein At1g20600 (237 aa).

The segment at 53–79 (LVSQANQKQSRKREEKTEKNQPKRVKN) is disordered. Over residues 64 to 73 (KREEKTEKNQ) the composition is skewed to basic and acidic residues. The segment at residues 126–230 (KKQLMSSDVD…LEHVFIRGSK (105 aa)) is a DNA-binding region (TF-B3).

The protein resides in the nucleus. The protein is B3 domain-containing protein At1g20600 of Arabidopsis thaliana (Mouse-ear cress).